The sequence spans 196 residues: Fucoxanthin-chlorophyll a-c binding protein A, chloroplastic (196 aa).

Residues methionine 1–methionine 31 constitute a chloroplast transit peptide. The next 3 helical transmembrane spans lie at isoleucine 73–isoleucine 94, valine 114–methionine 134, and glycine 174–proline 196.

It belongs to the fucoxanthin chlorophyll protein family. As to quaternary structure, the LHC complex of chromophytic algae is composed of fucoxanthin, chlorophyll A and C bound non-covalently by fucoxanthin chlorophyll proteins (FCPs). The ratio of the pigments in LHC; fucoxanthin: chlorophyll C: chlorophyll A; (0.6-1): (0.1-0.3): (1).

The protein resides in the plastid. The protein localises to the chloroplast thylakoid membrane. In terms of biological role, the light-harvesting complex (LHC) functions as a light receptor, it captures and delivers excitation energy to photosystems with which it is closely associated. Energy is transferred from the carotenoid and chlorophyll C (or B) to chlorophyll A and the photosynthetic reaction centers where it is used to synthesize ATP and reducing power. This chain is Fucoxanthin-chlorophyll a-c binding protein A, chloroplastic (FCPA), found in Phaeodactylum tricornutum (Diatom).